Consider the following 347-residue polypeptide: G-protein coupled receptor homolog U12 (347 aa).

Helical transmembrane passes span 36–56, 67–87, 103–124, 147–167, 194–214, and 236–256; these read GITL…MILY, FYVI…FFMT, LVYF…IIAT, IGIL…FVKT, IVFS…FYVI, and ILLL…ICEI. Cysteines 101 and 176 form a disulfide. Residues 321–347 are disordered; the sequence is QKRKDSDASEHDQNSKSKASVEKNQPL. The segment covering 322 to 341 has biased composition (basic and acidic residues); that stretch reads KRKDSDASEHDQNSKSKASV.

Belongs to the G-protein coupled receptor 1 family.

The protein localises to the membrane. Probable G-protein coupled receptor. The polypeptide is G-protein coupled receptor homolog U12 (U12) (Homo sapiens (Human)).